Here is a 412-residue protein sequence, read N- to C-terminus: MAEAARHPDDMKTPDELYRYLVDRVAGMESQNQELKEQIRQLESDKRYIETQKIRYEREVRKLKSEIEHLKTPPLIVGTITDIIDSGRVVVRSSAGPRFLVRVSQAVNPTTLKAGVRCTLNQQSLAIVEVLPSTYDSQVYGMELVDAPTETYEDIGGLEKQIMEIREAVELPMTRPDLFEKIGINPPKGVLLYGPPGTGKTLLAKAVAHETHAIFLHTVGSELVQKYIGEGARLVRELFDLAKEKAPSIVFIDEIDAIGASRTEAMTSGDREVQRTLMQLLAAMDGFEPRGDVKIIGATNRIDILDAALLRPGRFDRIIEIPLPDTEGRYSILKVHTRCMNLSEDVDLMEVARLTEGRNGAELNAICMEAGMFAIRKEHPQVDQEDFLTALNKFRCDFERDHRLTTAGVMFA.

Residues 18–72 (YRYLVDRVAGMESQNQELKEQIRQLESDKRYIETQKIRYEREVRKLKSEIEHLKT) are a coiled coil. Residues 197 to 202 (GTGKTL) and His336 contribute to the ATP site. Residues 410 to 412 (MFA) are docks into pockets in the proteasome alpha-ring to cause gate opening.

This sequence belongs to the AAA ATPase family. As to quaternary structure, homohexamer. The hexameric complex has a two-ring architecture resembling a top hat that caps the 20S proteasome core at one or both ends. Upon ATP-binding, the C-terminus of PAN interacts with the alpha-rings of the proteasome core by binding to the intersubunit pockets.

It localises to the cytoplasm. In terms of biological role, ATPase which is responsible for recognizing, binding, unfolding and translocation of substrate proteins into the archaeal 20S proteasome core particle. Is essential for opening the gate of the 20S proteasome via an interaction with its C-terminus, thereby allowing substrate entry and access to the site of proteolysis. Thus, the C-termini of the proteasomal ATPase function like a 'key in a lock' to induce gate opening and therefore regulate proteolysis. Unfolding activity requires energy from ATP hydrolysis, whereas ATP binding alone promotes ATPase-20S proteasome association which triggers gate opening, and supports translocation of unfolded substrates. In Methanospirillum hungatei JF-1 (strain ATCC 27890 / DSM 864 / NBRC 100397 / JF-1), this protein is Proteasome-activating nucleotidase.